We begin with the raw amino-acid sequence, 351 residues long: Ferrochelatase (351 aa).

H221 and E302 together coordinate Fe cation.

It belongs to the ferrochelatase family.

It localises to the cytoplasm. The enzyme catalyses heme b + 2 H(+) = protoporphyrin IX + Fe(2+). Its pathway is porphyrin-containing compound metabolism; protoheme biosynthesis; protoheme from protoporphyrin-IX: step 1/1. Catalyzes the ferrous insertion into protoporphyrin IX. The chain is Ferrochelatase from Bradyrhizobium sp. (strain BTAi1 / ATCC BAA-1182).